A 395-amino-acid chain; its full sequence is Phosphoglycerate kinase (395 aa).

Residues 20–22 (DFN), R36, 59–62 (HLGR), R120, and R157 contribute to the substrate site. ATP contacts are provided by residues K208, G296, E327, and 353 to 356 (GGDT).

This sequence belongs to the phosphoglycerate kinase family. In terms of assembly, monomer.

Its subcellular location is the cytoplasm. The catalysed reaction is (2R)-3-phosphoglycerate + ATP = (2R)-3-phospho-glyceroyl phosphate + ADP. The protein operates within carbohydrate degradation; glycolysis; pyruvate from D-glyceraldehyde 3-phosphate: step 2/5. The chain is Phosphoglycerate kinase from Tropheryma whipplei (strain TW08/27) (Whipple's bacillus).